The primary structure comprises 98 residues: Feather keratin 1 (98 aa).

It belongs to the avian keratin family. The avian keratins (F-ker, S-ker, C-ker and B-ker) are a complex mixture of very similar polypeptides.

This Gallus gallus (Chicken) protein is Feather keratin 1.